The following is a 211-amino-acid chain: Ribosome maturation factor RimM (211 aa).

Residues 111-182 enclose the PRC barrel domain; sequence PDAWYDHQLV…TLVVTPPLGL (72 aa). The segment at 184 to 211 is disordered; that stretch reads EEIPDETPTAEPTPAEAAEPAPEGDDAR. A compositionally biased stretch (low complexity) spans 189–204; sequence ETPTAEPTPAEAAEPA.

Belongs to the RimM family. As to quaternary structure, binds ribosomal protein uS19.

It localises to the cytoplasm. Its function is as follows. An accessory protein needed during the final step in the assembly of 30S ribosomal subunit, possibly for assembly of the head region. Essential for efficient processing of 16S rRNA. May be needed both before and after RbfA during the maturation of 16S rRNA. It has affinity for free ribosomal 30S subunits but not for 70S ribosomes. In Clavibacter michiganensis subsp. michiganensis (strain NCPPB 382), this protein is Ribosome maturation factor RimM.